A 127-amino-acid polypeptide reads, in one-letter code: Egg cell-secreted protein 1.4 (127 aa).

The first 25 residues, 1–25, serve as a signal peptide directing secretion; it reads MASNTTFLFSTVTLLIILLNTTVSG.

It belongs to the plant egg cell-secreted peptide family. Restricted to female reproductive tissues, specifically accumulating in storage vesicles of the unfertilized egg cell.

It is found in the cytoplasmic vesicle. Its subcellular location is the secreted. Functionally, involved in the regulation of gamete interactions during the double fertilization and to prevent multiple-pollen tube attraction; mediates the redistribution of the gamete fusogen HAP2/GCS1 to the cell surface after secretion upon sperm arrival. This is Egg cell-secreted protein 1.4 (EC1.4) from Arabidopsis thaliana (Mouse-ear cress).